A 377-amino-acid polypeptide reads, in one-letter code: MVNTSFETLALDMQIEILARLPLKYLMRCMCVSKKWASLIRGEDFRSAYLLRSMARPRLLFVASRSRKFTRETCFHSVYQEPPLLLSGKRQMLTDNHIAPVFTVSNPILGLLCHQGYNNEIVICNPGLKKFRNLPQIQVPEGASVRSFFGYDKVDKVFKVLCVCVPQTQFGAGWTSKEPKKYQVYTVRSDHEKPSFWRPIICNDDHSVVTDEGLFNGGFLYYGARSSCNKPMVMRFNVSSEAFAVIKLPEEVDIDYHWRLVNYKGKVALVNTFDSKFKFNGVFEIWVRNEVDRKWDKDIIKIPQWTESVDNYNVYFKGTTGTKELVFAPPNWFGEPLFVLYYDKATTNLRRFDIEGMDDQHYSFHTFLDHVDSTWLM.

The region spanning 3 to 48 is the F-box domain; the sequence is NTSFETLALDMQIEILARLPLKYLMRCMCVSKKWASLIRGEDFRSA.

This chain is Putative F-box protein At1g70380, found in Arabidopsis thaliana (Mouse-ear cress).